The following is a 192-amino-acid chain: PTS-dependent dihydroxyacetone kinase, ADP-binding subunit DhaL (192 aa).

In terms of domain architecture, DhaL spans 5–189; that stretch reads DTTIEWLGKF…SAYLFETLLE (185 aa). 3 residues coordinate Mg(2+): aspartate 29, aspartate 34, and aspartate 36. ADP is bound by residues 37 to 40, 78 to 79, glycine 115, methionine 124, arginine 161, and 174 to 176; these read HGAN, AS, and DPG.

As to quaternary structure, homodimer. The dihydroxyacetone kinase complex is composed of a homodimer of DhaM, a homodimer of DhaK and the subunit DhaL. The cofactor is Mg(2+).

It localises to the cytoplasm. It catalyses the reaction dihydroxyacetone + phosphoenolpyruvate = dihydroxyacetone phosphate + pyruvate. The protein operates within polyol metabolism; glycerol degradation. Functionally, ADP-binding subunit of the dihydroxyacetone kinase, which is responsible for the phosphoenolpyruvate (PEP)-dependent phosphorylation of dihydroxyacetone. DhaL-ADP is converted to DhaL-ATP via a phosphoryl group transfer from DhaM and transmits it to dihydroxyacetone binds to DhaK. The protein is PTS-dependent dihydroxyacetone kinase, ADP-binding subunit DhaL of Lactococcus lactis subsp. lactis (strain IL1403) (Streptococcus lactis).